Here is a 358-residue protein sequence, read N- to C-terminus: WD repeat-containing protein 53 (358 aa).

WD repeat units lie at residues Gly-8–Thr-46, Val-92–Ser-131, Arg-134–Ile-174, Leu-195–Glu-234, and Gly-239–His-278. The segment covering His-278–Ala-294 has biased composition (basic residues). The tract at residues His-278–Glu-309 is disordered.

It belongs to the WD repeat WDR53 family.

The polypeptide is WD repeat-containing protein 53 (WDR53) (Bos taurus (Bovine)).